Reading from the N-terminus, the 172-residue chain is Putative metal-dependent hydrolase OB0782 (172 aa).

Zn(2+) is bound by residues His64, His155, and His159.

It belongs to the metal hydrolase YfiT family. As to quaternary structure, homodimer. Requires Zn(2+) as cofactor.

It is found in the cytoplasm. Functionally, possible metal-dependent hydrolase. This chain is Putative metal-dependent hydrolase OB0782, found in Oceanobacillus iheyensis (strain DSM 14371 / CIP 107618 / JCM 11309 / KCTC 3954 / HTE831).